The primary structure comprises 428 residues: L-lysine N6-monooxygenase MbtG (428 aa).

The signal sequence occupies residues Met-1–Ala-20.

Belongs to the lysine N(6)-hydroxylase/L-ornithine N(5)-oxygenase family. FAD serves as cofactor.

It carries out the reaction L-lysine + NADPH + O2 = N(6)-hydroxy-L-lysine + NADP(+) + H2O. It functions in the pathway siderophore biosynthesis; mycobactin biosynthesis. Its function is as follows. Flavoprotein monooxygenase required for N-hydroxylation of the two acylated lysine residues during mycobactin assembly, thus producing the hydroxamate groups necessary for iron sequestration. Is also able, but less efficiently, to hydroxylate L-lysine (non acylated) in vitro. The protein is L-lysine N6-monooxygenase MbtG (mbtG) of Mycolicibacterium paratuberculosis (strain ATCC BAA-968 / K-10) (Mycobacterium paratuberculosis).